The following is a 122-amino-acid chain: Serum amyloid A-3 protein (122 aa).

Positions Met-1–Ser-18 are cleaved as a signal peptide. The segment at Ala-100 to Tyr-122 is disordered.

Belongs to the SAA family. Expressed by the liver; secreted in plasma.

The protein resides in the secreted. In terms of biological role, major acute phase reactant. Apolipoprotein of the HDL complex. In vitro exhibits antimicrobial activity against Escherichia coli, Streptococcus uberis and Pseudomonas aeruginosa. The protein is Serum amyloid A-3 protein (SAA3) of Mesocricetus auratus (Golden hamster).